The chain runs to 523 residues: Katanin p60 ATPase-containing subunit A1 (523 aa).

The tract at residues 82–215 (KEAPTGRRAA…DGKSKRGLYE (134 aa)) is disordered. Positions 178-194 (AGARSSTAGKKGAASKS) are enriched in low complexity. Residue 279 to 286 (GPPGTGKT) coordinates ATP.

It belongs to the AAA ATPase family. Katanin p60 subunit A1 subfamily. May homooligomerize. Component of KTN80-KTN1 complexes composed of a hexamer of KTN1-KTN80 heterodimers that sense microtubule (MT) geometry to confer precise MT severing. Interacts directly with KTN80.1, KTN80.2, KTN80.3 and KTN80.4. Can interact with KTN80.1. May interact with the kinesin related protein KIN14A. Interacts with microtubule polymers. Binds to IPGA1. In terms of tissue distribution, expressed ubiquitously, including siliques, flowers, leaves, stems and roots.

It is found in the cytoplasm. Its subcellular location is the cytoskeleton. The catalysed reaction is n ATP + n H2O + a microtubule = n ADP + n phosphate + (n+1) alpha/beta tubulin heterodimers.. In terms of biological role, severs microtubules in vitro in an ATP-dependent manner. Required for oligomerization of functional KTN80-KTN1 complexes that catalyze microtubule severing. This activity may promote rapid reorganization of cellular microtubule arrays. May be required for reorientation of cortical microtubule arrays during cellular elongation. Failure to correctly orient these arrays drastically compromises fiber length, cell wall thickness and mechanical strength. May also be required for the spatial organization of developmental cues within the root. Involved in the IPGA1- and AN-dependent regulation of pavement cells morphogenesis leading to puzzle shape. This chain is Katanin p60 ATPase-containing subunit A1, found in Arabidopsis thaliana (Mouse-ear cress).